The following is a 989-amino-acid chain: Bifunctional glutamine synthetase adenylyltransferase/adenylyl-removing enzyme (989 aa).

The segment at 1 to 473 (MRGPLEPDSA…HYANLFEDVA (473 aa)) is adenylyl removase. The adenylyl transferase stretch occupies residues 479–989 (DADLMFPPDE…FERILETAAE (511 aa)).

Belongs to the GlnE family. Mg(2+) is required as a cofactor.

It catalyses the reaction [glutamine synthetase]-O(4)-(5'-adenylyl)-L-tyrosine + phosphate = [glutamine synthetase]-L-tyrosine + ADP. It carries out the reaction [glutamine synthetase]-L-tyrosine + ATP = [glutamine synthetase]-O(4)-(5'-adenylyl)-L-tyrosine + diphosphate. Functionally, involved in the regulation of glutamine synthetase GlnA, a key enzyme in the process to assimilate ammonia. When cellular nitrogen levels are high, the C-terminal adenylyl transferase (AT) inactivates GlnA by covalent transfer of an adenylyl group from ATP to specific tyrosine residue of GlnA, thus reducing its activity. Conversely, when nitrogen levels are low, the N-terminal adenylyl removase (AR) activates GlnA by removing the adenylyl group by phosphorolysis, increasing its activity. The regulatory region of GlnE binds the signal transduction protein PII (GlnB) which indicates the nitrogen status of the cell. The sequence is that of Bifunctional glutamine synthetase adenylyltransferase/adenylyl-removing enzyme from Xanthobacter autotrophicus (strain ATCC BAA-1158 / Py2).